The chain runs to 345 residues: ATP-dependent kinase YFH7 (345 aa).

Position 31-39 (31-39 (GPPGSGKST)) interacts with ATP.

This sequence belongs to the YFH7 family.

Functionally, ATP-dependent kinase that could be involved in endoplasmic reticulum membrane assembly. The protein is ATP-dependent kinase YFH7 (YFH7) of Candida glabrata (strain ATCC 2001 / BCRC 20586 / JCM 3761 / NBRC 0622 / NRRL Y-65 / CBS 138) (Yeast).